The primary structure comprises 558 residues: Polypeptide N-acetylgalactosaminyltransferase 16 (558 aa).

The Cytoplasmic portion of the chain corresponds to 1–6 (MRKIRA). The helical; Signal-anchor for type II membrane protein transmembrane segment at 7-26 (NAIAILTVAWILGTFYYLWQ) threads the bilayer. Over 27-558 (DNRAHAASSG…AQQWQLLPHT (532 aa)) the chain is Lumenal. Residues 33 to 54 (ASSGGRGAQRAGRRSEQLREDR) are disordered. The segment covering 45-54 (RRSEQLREDR) has biased composition (basic and acidic residues). Intrachain disulfides connect Cys113–Cys340, Cys331–Cys409, Cys441–Cys460, Cys486–Cys506, and Cys530–Cys543. The catalytic subdomain A stretch occupies residues 122–227 (LPATSVIITF…TEWLPPMLQR (106 aa)). Positions 163 and 188 each coordinate substrate. Asp211 lines the Mn(2+) pocket. Position 212 (Ser212) interacts with substrate. His213 provides a ligand contact to Mn(2+). The interval 286–348 (PIRTPVIAGG…PCSRVGHVFR (63 aa)) is catalytic subdomain B. Trp317 contributes to the substrate binding site. Position 345 (His345) interacts with Mn(2+). Residues Arg348, His351, and Tyr353 each coordinate substrate. Positions 428 to 555 (KEALPGIIKQ…DAQAQQWQLL (128 aa)) constitute a Ricin B-type lectin domain.

It belongs to the glycosyltransferase 2 family. GalNAc-T subfamily. The cofactor is Mn(2+).

It localises to the golgi apparatus membrane. It carries out the reaction L-seryl-[protein] + UDP-N-acetyl-alpha-D-galactosamine = a 3-O-[N-acetyl-alpha-D-galactosaminyl]-L-seryl-[protein] + UDP + H(+). The catalysed reaction is L-threonyl-[protein] + UDP-N-acetyl-alpha-D-galactosamine = a 3-O-[N-acetyl-alpha-D-galactosaminyl]-L-threonyl-[protein] + UDP + H(+). It participates in protein modification; protein glycosylation. Functionally, catalyzes the initial reaction in O-linked oligosaccharide biosynthesis, the transfer of an N-acetyl-D-galactosamine residue to a serine or threonine residue on the protein receptor. In Homo sapiens (Human), this protein is Polypeptide N-acetylgalactosaminyltransferase 16 (GALNT16).